Reading from the N-terminus, the 729-residue chain is Catalase-peroxidase (729 aa).

Residues 1 to 20 (MHNGSNGSVEQRDSMPETSR) are disordered. The span at 10–20 (EQRDSMPETSR) shows a compositional bias: basic and acidic residues. A cross-link (tryptophyl-tyrosyl-methioninium (Trp-Tyr) (with M-240)) is located at residues 91 to 214 (WHAAGTYRTT…LGATVMGLIY (124 aa)). His92 functions as the Proton acceptor in the catalytic mechanism. Positions 214–240 (YVNPEGPESTPDPEWSAQRIRKSFGRM) form a cross-link, tryptophyl-tyrosyl-methioninium (Tyr-Met) (with W-91). His255 contacts heme b.

The protein belongs to the peroxidase family. Peroxidase/catalase subfamily. As to quaternary structure, homodimer or homotetramer. The cofactor is heme b. Post-translationally, formation of the three residue Trp-Tyr-Met cross-link is important for the catalase, but not the peroxidase activity of the enzyme.

It carries out the reaction H2O2 + AH2 = A + 2 H2O. It catalyses the reaction 2 H2O2 = O2 + 2 H2O. Its function is as follows. Bifunctional enzyme with both catalase and broad-spectrum peroxidase activity. The sequence is that of Catalase-peroxidase from Salinibacter ruber (strain DSM 13855 / M31).